The following is a 254-amino-acid chain: MDKLIIGGIEIKNRLFVGSGKYPSNEIIKDVLEGSGSQVITLALRRVDLDNKEEDILQNIPKDVILLPNTSGATNAEEAIRIARIARAMGCGNWIKIEVISDSKYLLPDNEETIKATKVLADEGFIVLPYMCPDIYAGRRLIEAGAAAVMPLGAPIGSNRGLKTKELIQIMIDELDIPIIVDAGIGKPSQAMEAMEMGAAACLVNTAIASSEDPINMARAFKVAVEGGRLAYEAKMGRESKFGNASSPLTGFLD.

The active-site Schiff-base intermediate with DXP is the Lys96. Residues Gly157, 183–184, and 205–206 each bind 1-deoxy-D-xylulose 5-phosphate; these read AG and NT.

This sequence belongs to the ThiG family. Homotetramer. Forms heterodimers with either ThiH or ThiS.

It is found in the cytoplasm. It carries out the reaction [ThiS sulfur-carrier protein]-C-terminal-Gly-aminoethanethioate + 2-iminoacetate + 1-deoxy-D-xylulose 5-phosphate = [ThiS sulfur-carrier protein]-C-terminal Gly-Gly + 2-[(2R,5Z)-2-carboxy-4-methylthiazol-5(2H)-ylidene]ethyl phosphate + 2 H2O + H(+). It participates in cofactor biosynthesis; thiamine diphosphate biosynthesis. Its function is as follows. Catalyzes the rearrangement of 1-deoxy-D-xylulose 5-phosphate (DXP) to produce the thiazole phosphate moiety of thiamine. Sulfur is provided by the thiocarboxylate moiety of the carrier protein ThiS. In vitro, sulfur can be provided by H(2)S. This is Thiazole synthase from Clostridium perfringens (strain 13 / Type A).